Here is a 338-residue protein sequence, read N- to C-terminus: NADPH dehydrogenase (338 aa).

22–25 (SPMC) is an FMN binding site. Tyr27 contacts substrate. FMN contacts are provided by Ala59 and Gln101. Residue 163-166 (HAAH) coordinates substrate. FMN is bound by residues Arg214 and 306 to 307 (GR).

This sequence belongs to the NADH:flavin oxidoreductase/NADH oxidase family. NamA subfamily. Homotetramer. FMN is required as a cofactor.

The enzyme catalyses A + NADPH + H(+) = AH2 + NADP(+). In terms of biological role, catalyzes the reduction of the double bond of an array of alpha,beta-unsaturated aldehydes and ketones. It also reduces the nitro group of nitroester and nitroaromatic compounds. It could have a role in detoxification processes. The polypeptide is NADPH dehydrogenase (Listeria monocytogenes serovar 1/2a (strain ATCC BAA-679 / EGD-e)).